The following is a 133-amino-acid chain: Cytidine deaminase (133 aa).

Positions 3–131 (VDLDWVHHKL…EILKGGFRSY (129 aa)) constitute a CMP/dCMP-type deaminase domain. 43–45 (NIE) serves as a coordination point for substrate. C54 lines the Zn(2+) pocket. The active-site Proton donor is the E56. Zn(2+) contacts are provided by C89 and C92.

The protein belongs to the cytidine and deoxycytidylate deaminase family. Homodimer. It depends on Zn(2+) as a cofactor.

It carries out the reaction cytidine + H2O + H(+) = uridine + NH4(+). The catalysed reaction is 2'-deoxycytidine + H2O + H(+) = 2'-deoxyuridine + NH4(+). Its function is as follows. This enzyme scavenges exogenous and endogenous cytidine and 2'-deoxycytidine for UMP synthesis. The protein is Cytidine deaminase (cdd) of Mycoplasma pneumoniae (strain ATCC 29342 / M129 / Subtype 1) (Mycoplasmoides pneumoniae).